Consider the following 89-residue polypeptide: Protein S100-A6 (89 aa).

2 EF-hand domains span residues 12 to 47 (LVAI…IGAK) and 48 to 83 (LQDA…LALI). Ca(2+)-binding residues include threonine 28 and glutamate 33. N6-acetyllysine is present on lysine 40. Lysine 47 is modified (N6-acetyllysine; alternate). Lysine 47 carries the post-translational modification N6-succinyllysine; alternate. Ca(2+) contacts are provided by aspartate 61, asparagine 63, aspartate 65, glutamate 67, and glutamate 72.

Belongs to the S-100 family. Homodimer; head to tail assembly of 2 subunits. Interacts with CACYBP in a calcium-dependent manner. Interacts with ANXA2 and ANXA11 (via N-terminus). Interacts with SUGT1. Interacts with TP53; has higher affinity for TP53 that is phosphorylated on its N-terminal domain, and lower affinity for TP53 that is phosphorylated on its C-terminal domain. Interacts with tropomyosin. Interacts with FKBP4. Interacts with PPP5C (via TPR repeats); the interaction is calcium-dependent and modulates PPP5C activity. Interacts with TPPP; this interaction inhibits TPPP dimerization.

Its subcellular location is the nucleus envelope. It is found in the cytoplasm. It localises to the cell membrane. May function as calcium sensor and modulator, contributing to cellular calcium signaling. May function by interacting with other proteins, such as TPR-containing proteins, and indirectly play a role in many physiological processes such as the reorganization of the actin cytoskeleton and in cell motility. Binds 2 calcium ions. Calcium binding is cooperative. This Rattus norvegicus (Rat) protein is Protein S100-A6 (S100a6).